The following is a 227-amino-acid chain: Ribosomal RNA large subunit methyltransferase E (227 aa).

Residues G78, W80, D103, D119, and D143 each coordinate S-adenosyl-L-methionine. K183 serves as the catalytic Proton acceptor.

Belongs to the class I-like SAM-binding methyltransferase superfamily. RNA methyltransferase RlmE family.

It is found in the cytoplasm. It carries out the reaction uridine(2552) in 23S rRNA + S-adenosyl-L-methionine = 2'-O-methyluridine(2552) in 23S rRNA + S-adenosyl-L-homocysteine + H(+). Functionally, specifically methylates the uridine in position 2552 of 23S rRNA at the 2'-O position of the ribose in the fully assembled 50S ribosomal subunit. The sequence is that of Ribosomal RNA large subunit methyltransferase E from Rickettsia conorii (strain ATCC VR-613 / Malish 7).